The primary structure comprises 1607 residues: Phosphatidylinositol 3-kinase piki-1 (1607 aa).

Residues 2–21 (SDDEELQLAIEISKKTFKDE) enclose the UIM domain. 3 disordered regions span residues 54-91 (EANS…HSQS), 105-128 (STSQ…KFPP), and 142-182 (PPPP…SFAS). Polar residues predominate over residues 58 to 69 (PGPSSYSGSLAT). The segment covering 158–169 (PPVPIHPTPPVS) has biased composition (pro residues). A PI3K-RBD domain is found at 362–453 (ASTVKVVVYK…GDDVKLDLGV (92 aa)). Residues 598–766 (KMDFLQIMLN…KIWDTEIYFP (169 aa)) enclose the C2 PI3K-type domain. The region spanning 776-953 (PQDFATLDIE…AIRCQNLQQK (178 aa)) is the PIK helical domain. The PI3K/PI4K catalytic domain occupies 1029–1303 (RIEECSVFNS…MIQNSLGSAF (275 aa)). A G-loop region spans residues 1035 to 1041 (VFNSNAK). Residues 1168–1176 (GIGDRHNDN) are catalytic loop. The segment at 1187 to 1213 (HIDFGKYMGDWQMAAGFRRDRVPFVFT) is activation loop. The PX domain maps to 1344–1458 (GRISRVTVLK…TFFHSILRDN (115 aa)). The C2 domain occupies 1472–1601 (SQCQIYLKIE…KNCRTLEGWF (130 aa)).

The protein belongs to the PI3/PI4-kinase family.

It is found in the cell projection. Its subcellular location is the phagocytic cup. The protein resides in the cytoplasmic vesicle. It localises to the phagosome membrane. The protein localises to the cytoplasm. It carries out the reaction a 1,2-diacyl-sn-glycero-3-phospho-(1D-myo-inositol) + ATP = a 1,2-diacyl-sn-glycero-3-phospho-(1D-myo-inositol-3-phosphate) + ADP + H(+). Its function is as follows. Phosphatidylinositol 3-kinase involved in clearance of apoptotic cell corpses by phagosomes. Phagosome maturation requires two sequential and non-overlapping pulses of phosphatidylinositol-3-phosphate (PI3P) on the vesicle surface which mediates recruitment of sortins snx-1 and lst-4 and small GTPases rab-5, rab-2 and rab-7. The first pulse is initiated by piki-1, then maintained by vps-34 which also produces the second pulse. Unlike vps-34, not involved in the formation of PI3P in early endosomes. In Caenorhabditis elegans, this protein is Phosphatidylinositol 3-kinase piki-1.